A 322-amino-acid chain; its full sequence is UDP-N-acetylenolpyruvoylglucosamine reductase (322 aa).

In terms of domain architecture, FAD-binding PCMH-type spans 36-202 (RAGGPAQVLF…TSVLFEGVPG (167 aa)). Arg-182 is an active-site residue. Ser-231 (proton donor) is an active-site residue. Glu-301 is a catalytic residue.

It belongs to the MurB family. The cofactor is FAD.

Its subcellular location is the cytoplasm. The enzyme catalyses UDP-N-acetyl-alpha-D-muramate + NADP(+) = UDP-N-acetyl-3-O-(1-carboxyvinyl)-alpha-D-glucosamine + NADPH + H(+). Its pathway is cell wall biogenesis; peptidoglycan biosynthesis. Its function is as follows. Cell wall formation. The protein is UDP-N-acetylenolpyruvoylglucosamine reductase of Brucella abortus (strain S19).